A 107-amino-acid polypeptide reads, in one-letter code: Anti-adapter protein IraM (107 aa).

This sequence belongs to the IraM/RssC family.

It is found in the cytoplasm. In terms of biological role, inhibits RpoS proteolysis by regulating RssB activity, thereby increasing the stability of the sigma stress factor RpoS during magnesium starvation. This chain is Anti-adapter protein IraM, found in Escherichia coli O17:K52:H18 (strain UMN026 / ExPEC).